Reading from the N-terminus, the 372-residue chain is Signal peptide peptidase-like 1 (372 aa).

Over 1–6 (METLWT) the chain is Lumenal. Residues 7 to 27 (LLYLLEPAPATLIVTAVTVTF) traverse the membrane as a helical segment. Over 28 to 54 (ASAFRALNYGKEMERNRDFSEASITLD) the chain is Cytoplasmic. Residues 55–77 (SSQALMIPVMSSCSLLLMFYLFS) form a helical membrane-spanning segment. The Lumenal portion of the chain corresponds to 78-81 (SVSQ). Residues 82-104 (LLTAFTAIASVSSLFYWLSPYAV) form a helical membrane-spanning segment. Topologically, residues 105-123 (YMKTQLGLSDPFLSRCCSK) are cytoplasmic. Residues 124 to 146 (SFTRIQGLLLVACAMTVVAWLIS) form a helical membrane-spanning segment. The Lumenal portion of the chain corresponds to 147–149 (GHW). The chain crosses the membrane as a helical span at residues 150 to 167 (VLNNLLGISICIAFVSHV). The Cytoplasmic segment spans residues 168-171 (RLPN). Residues 172–192 (IKICAMLLVCLFVYDIFWVFF) traverse the membrane as a helical segment. Aspartate 186 is an active-site residue. Residues 193-257 (SERFFGANVM…GVVPGVSASD (65 aa)) are Lumenal-facing. Residues 258-278 (FMMLGLGDMAIPAMLLALVLC) traverse the membrane as a helical segment. The active site involves aspartate 265. Topologically, residues 279-301 (FDHRKTRDVVNIFDLKSSKGHKY) are cytoplasmic. Residues 302–322 (IWYALPGYAIGLVAALAAGVL) form a helical membrane-spanning segment. The Lumenal portion of the chain corresponds to 323 to 325 (THS). A helical transmembrane segment spans residues 326 to 346 (PQPALLYLVPSTLGPVIFMSW). Residues 328-330 (PAL) carry the PAL motif. The Cytoplasmic segment spans residues 347-372 (RRKDLAELWEGPALSNPIEKSHEIEI).

It belongs to the peptidase A22B family. Ubiquitous.

Its subcellular location is the endosome membrane. In terms of biological role, intramembrane-cleaving aspartic protease (I-CLiP) that cleaves type II membrane signal peptides in the hydrophobic plane of the membrane. In Arabidopsis thaliana (Mouse-ear cress), this protein is Signal peptide peptidase-like 1 (SPPL1).